We begin with the raw amino-acid sequence, 342 residues long: Probable alcohol acetyltransferase (342 aa).

Residues 1 to 38 (MMILGKAGILAQYGTIYVRQNTIRNNLSSCIFKQSLCA) constitute a mitochondrion transit peptide. Residues 39 to 46 (FHSLAKVL) constitute a propeptide, removed in mature form. Residues 75 to 326 (PPIIILHGLF…AGHWVNAEKP (252 aa)) form the AB hydrolase-1 domain. Active-site charge relay system residues include Ser-152 and His-319.

The protein belongs to the AB hydrolase superfamily. In terms of processing, processed by both the mitochondrial processing peptidase (MPP) and the mitochondrial octapeptidyl aminopeptidase (OCT1).

It is found in the mitochondrion. Its function is as follows. Probable alcohol acetyltransferase that uses acetyl-CoA to synthesize acetate esters from various alcohols. Not involved in the synthesis of ethyl acetate. The protein is Probable alcohol acetyltransferase (IMO32) of Saccharomyces cerevisiae (strain ATCC 204508 / S288c) (Baker's yeast).